Reading from the N-terminus, the 371-residue chain is MKNNKDTRVVVGMSGGVDSSVAALLLKQQGYDVVGIFMKNWDDTDEFGVCTATEDFDDVVRVCNQLEIPYYSVNFEKQYWDKVFTYFLDEYKAGRTPNPDVMCNKEIKFKAFLDHALALGADYLATGHYAQVRRDKNGRVEMLRGNDENKDQTYFLNQLSEDVLDKVMFPLGHLPKSEVRKIAKEHELVTAEKKDSTGICFIGERNFKEFLSEYLPAQPGEMQTLDGIVKGSHDGLMYYTLGQRQGLGIGGSGDPWFVVGKNLTDNILYVGQGYENDYLYSNALVATDINWIQPDKISDTFNCTAKFRYRQQDSEVNVTIKSENEVYVAFKEDQRAITPGQAVVFYDGEVCLGGGTIDTIIKNDHKLDYVG.

Residues 12–19 (GMSGGVDS) and Met-38 contribute to the ATP site. Positions 98–100 (NPD) are interaction with target base in tRNA. Cys-103 acts as the Nucleophile in catalysis. A disulfide bridge connects residues Cys-103 and Cys-200. Gly-127 lines the ATP pocket. Positions 150–152 (KDQ) are interaction with tRNA. Residue Cys-200 is the Cysteine persulfide intermediate of the active site. Residues 308–309 (RY) are interaction with tRNA.

The protein belongs to the MnmA/TRMU family.

The protein resides in the cytoplasm. It catalyses the reaction S-sulfanyl-L-cysteinyl-[protein] + uridine(34) in tRNA + AH2 + ATP = 2-thiouridine(34) in tRNA + L-cysteinyl-[protein] + A + AMP + diphosphate + H(+). Catalyzes the 2-thiolation of uridine at the wobble position (U34) of tRNA, leading to the formation of s(2)U34. This chain is tRNA-specific 2-thiouridylase MnmA, found in Oceanobacillus iheyensis (strain DSM 14371 / CIP 107618 / JCM 11309 / KCTC 3954 / HTE831).